We begin with the raw amino-acid sequence, 850 residues long: AdoMet-dependent rRNA methyltransferase SPB1 (850 aa).

Positions 58, 60, 78, 94, and 119 each coordinate S-adenosyl-L-methionine. The active-site Proton acceptor is Lys159. Positions 273-282 are enriched in polar residues; that stretch reads GETNEMTWTP. 4 disordered regions span residues 273–305, 388–414, 529–569, and 620–646; these read GETN…ARDE, IDKE…NEMK, GISD…RTLN, and AKKN…KQDD. The segment covering 388–400 has biased composition (basic and acidic residues); the sequence is IDKELSELGEREK. Residues 397 to 425 adopt a coiled-coil conformation; sequence EREKARKKRERRRRNEMKQREIQRMQMNM. Over residues 401 to 411 the composition is skewed to basic residues; it reads ARKKRERRRRN. Composition is skewed to acidic residues over residues 537 to 561 and 628 to 638; these read DESD…DEDD and SDSEDEEDDIV. Residues 746 to 773 are a coiled coil; the sequence is LEAKGRKKMRALRRLEQMKKKSELINED. The interval 811–850 is disordered; the sequence is KNKGIAGRPRGVTGKYKMVDGTMKKEQRAIRRIKKKMGKK. A compositionally biased stretch (basic residues) spans 840–850; that stretch reads IRRIKKKMGKK.

The protein belongs to the class I-like SAM-binding methyltransferase superfamily. RNA methyltransferase RlmE family. SPB1 subfamily. In terms of assembly, component of the nucleolar and nucleoplasmic pre-60S ribosomal particle.

Its subcellular location is the nucleus. It is found in the nucleolus. It carries out the reaction a ribonucleotide in rRNA + S-adenosyl-L-methionine = a 2'-O-methylribonucleotide in rRNA + S-adenosyl-L-homocysteine + H(+). Required for proper assembly of pre-ribosomal particles during the biogenesis of the 60S ribosomal subunit. This chain is AdoMet-dependent rRNA methyltransferase SPB1, found in Yarrowia lipolytica (strain CLIB 122 / E 150) (Yeast).